The chain runs to 509 residues: Histidine--tRNA ligase, cytoplasmic (509 aa).

Residue A2 is modified to N-acetylalanine. The 57-residue stretch at 3–59 (ERAALEELVKLQGERVRGLKQQKASAELIEEEVAKLLKLKAQLGPDESKQKFVLKTP) folds into the WHEP-TRS domain. Position 66 is a phosphoserine (S66). L-histidine contacts are provided by residues 130-132 (DLT), R157, Q173, D177, R326, and 330-331 (YY). Residue S356 is modified to Phosphoserine.

This sequence belongs to the class-II aminoacyl-tRNA synthetase family. As to quaternary structure, homodimer. In terms of tissue distribution, brain, heart, liver and kidney.

Its subcellular location is the cytoplasm. It catalyses the reaction tRNA(His) + L-histidine + ATP = L-histidyl-tRNA(His) + AMP + diphosphate + H(+). In terms of biological role, catalyzes the ATP-dependent ligation of histidine to the 3'-end of its cognate tRNA, via the formation of an aminoacyl-adenylate intermediate (His-AMP). Plays a role in axon guidance. The sequence is that of Histidine--tRNA ligase, cytoplasmic from Homo sapiens (Human).